Here is an 873-residue protein sequence, read N- to C-terminus: MTLSRSSADDSTNNANRSYSAVAGTDNKRKRDEDSSDYVGVAESLEMLKKQEIDADHMAASAQQTLISWRSGENSRSLSSSGECSSSNRPESTRLQIFVRMMSGGKTIVIHAEKYDTVEKLHQRIEWKTKIPALEQRVIYKGKQLQRENSLTYYSIEQDASLQLVARMQSTEHPVAWQTIDDIMYTISRMYKGENLQSNINEKIVTFFAMIPVESDESIAKYLNIFSNSSVPAALVMLYASSLERNKSCAKSSVKLFLSNCVALPKNQKNYCLPIVLEFCKLLRKVCPDQKLYVTCRNTLGSMLETFDNPHGVYNDQYETFGVEIFPFFTELTGLLLNELAQNSGPSFCDFQKVSSFWQQLRKVIELKVAFPIPIVLPMQSTALEAEIRHLHRLFGSLLTTMDLCMCRVESSLADKEVGNSETMSSSWSQYLSILKIINSMSNIYQGAKGQLAVMLNKNKVSFSALVVKFAKRGDDHQWIFEYKEATNFEARRHLAMLLFPDVKEDFEEMHEMLIDRSNLLSESFEYIVGASPEALHGGLFMEFKNEEATGPGVLREWFYLVCQEIFNPKNTLFLRSADDFRRFSPNPASKVDPLHPDFFEFTGRVIALALMHKVQVGVLFDRVFFLQLAGLKISLEDIKDTDRIMYNSCKQILEMDPEFFDSNAGLGLTFVLETEELGKRDTIELCPDGKLKAVNSKNRKQYVDLLIERRFATPILEQVKQFSRGFTDMLSHSVPPRSFFKRLYLEDLDGMLRGGENPISIDDWKAHTEYNGFKETDRQIDWFWKILKKMTEEEQRSILFFWTSNKFVPVEGFRGLSSKLYIYRLYEANDRLPLSHTCFYRLCIPRYPTITLMEQRLRLIAQDHVSSSFGKW.

A compositionally biased stretch (polar residues) spans 1-19 (MTLSRSSADDSTNNANRSY). Disordered regions lie at residues 1-37 (MTLSRSSADDSTNNANRSYSAVAGTDNKRKRDEDSSD) and 70-90 (RSGENSRSLSSSGECSSSNRP). The Ubiquitin-like domain maps to 95–171 (LQIFVRMMSG…LQLVARMQST (77 aa)). The C-type lectin domain maps to 272-296 (CLPIVLEFCKLLRKVCPDQKLYVTC). The HECT domain occupies 532–873 (SPEALHGGLF…DHVSSSFGKW (342 aa)). The active-site Glycyl thioester intermediate is the cysteine 839.

Belongs to the UPL family. In terms of assembly, interacts with WRKY53.

It localises to the cytoplasm. It carries out the reaction S-ubiquitinyl-[E2 ubiquitin-conjugating enzyme]-L-cysteine + [acceptor protein]-L-lysine = [E2 ubiquitin-conjugating enzyme]-L-cysteine + N(6)-ubiquitinyl-[acceptor protein]-L-lysine.. It participates in protein modification; protein ubiquitination. Its function is as follows. E3 ubiquitin protein ligase that regulates leaf senescence through ubiquitination and subsequent degradation of WRKY53. The sequence is that of E3 ubiquitin-protein ligase UPL5 (UPL5) from Arabidopsis thaliana (Mouse-ear cress).